The primary structure comprises 803 residues: Ribonuclease II, chloroplastic/mitochondrial (803 aa).

Residues Met1 to Arg35 constitute a chloroplast and mitochondrion transit peptide. Residues Arg399–Arg694 form the RNB domain.

It belongs to the RNR ribonuclease family. Expressed in seedlings, roots, leaves and flowers.

It is found in the mitochondrion. The protein localises to the plastid. The protein resides in the chloroplast. The catalysed reaction is Exonucleolytic cleavage in the 3'- to 5'-direction to yield nucleoside 5'-phosphates.. In terms of biological role, 3'-5' exoribonuclease that catalyzes 3' maturation of chloroplast and mitochondrion ribosomal RNAs; degrades short nucleotidic extensions to generate the mature 3'-ends. Involved in the maturation of 23S, 16S and 5S rRNAs. The protein is Ribonuclease II, chloroplastic/mitochondrial (RNR1) of Arabidopsis thaliana (Mouse-ear cress).